The sequence spans 93 residues: Putative septation protein SpoVG (93 aa).

Belongs to the SpoVG family.

Its function is as follows. Could be involved in septation. This is Putative septation protein SpoVG from Fusobacterium nucleatum subsp. nucleatum (strain ATCC 25586 / DSM 15643 / BCRC 10681 / CIP 101130 / JCM 8532 / KCTC 2640 / LMG 13131 / VPI 4355).